Consider the following 36-residue polypeptide: Photosystem II reaction center protein Y (36 aa).

Residues 1-4 are Lumenal-facing; sequence MDSR. A helical transmembrane segment spans residues 5-23; that stretch reads LLVVLIPVLAAASWAVYNI. The Stromal segment spans residues 24–36; sequence GRVALQQFRKMTS.

Belongs to the PsbY family. As to quaternary structure, PSII is composed of 1 copy each of membrane proteins PsbA, PsbB, PsbC, PsbD, PsbE, PsbF, PsbH, PsbI, PsbJ, PsbK, PsbL, PsbM, PsbT, PsbX, PsbY, PsbZ, Psb30/Ycf12, at least 3 peripheral proteins of the oxygen-evolving complex and a large number of cofactors. It forms dimeric complexes.

It localises to the plastid. Its subcellular location is the chloroplast thylakoid membrane. Its function is as follows. Loosely associated component of the core of photosystem II (PSII), it is not always seen in crystals. PSII is a light-driven water plastoquinone oxidoreductase, using light energy to abstract electrons from H(2)O, generating a proton gradient subsequently used for ATP formation. The polypeptide is Photosystem II reaction center protein Y (Pyropia yezoensis (Susabi-nori)).